We begin with the raw amino-acid sequence, 2167 residues long: SH3 and multiple ankyrin repeat domains protein 1 (2167 aa).

The interval 1–63 is disordered; that stretch reads MTHSPATSED…TRGLQGRSMS (63 aa). Residues 17–32 show a composition bias toward low complexity; the sequence is SECPEGGSESDSSPDG. A compositionally biased stretch (gly residues) spans 33–47; the sequence is PGRGPQGTRGRGSGA. Arg-43 bears the Omega-N-methylarginine mark. Tyr-186 carries the phosphotyrosine modification. ANK repeat units lie at residues 195–210, 212–245, 246–278, 279–312, 313–345, 346–378, and 379–395; these read VARL…YHDS, SGET…FRAR, DGMT…YKDR, RGLT…IADE, NGWQ…AQNA, SGNT…VKNN, and NGQT…NFEL. 2 disordered regions span residues 413–432 and 453–546; these read SPKY…TVPP and APGA…SRGR. A compositionally biased stretch (low complexity) spans 453–479; it reads APGASSSGTPGPTSGPQGQSQPSAPST. Positions 527–542 are enriched in gly residues; the sequence is PAGGTGGSGGPGGSLG. Ser-540 carries the phosphoserine modification. Arg-544 carries the post-translational modification Omega-N-methylarginine. The 60-residue stretch at 554-613 folds into the SH3 domain; it reads VPGRSFMAVKSYQAQGEGEISLSKGEKIKVLSIGEGGFWEGQVKGRVGWFPSDCLEEVAN. A phosphoserine mark is found at Ser-638, Ser-641, Ser-671, and Ser-791. Positions 663-757 constitute a PDZ domain; that stretch reads TVLLQKKDSE…TLMVKVVMVT (95 aa). The interval 841–894 is disordered; the sequence is ISASESPGPGGLASLGKHRPKGFFATESSFDPHHRSQPSYDRPSFLPPGPGLML. Phosphoserine is present on Ser-898. 8 disordered regions span residues 917 to 1233, 1245 to 1294, 1308 to 1417, 1429 to 1725, 1740 to 1787, 1842 to 1866, 1898 to 1988, and 2002 to 2029; these read SRSL…LDFT, RREG…SIDE, GGSS…VLRL, RAGL…AGVA, GQAF…DPVT, KLLP…QPQA, PWAR…STRH, and RRAP…LPIL. Over residues 928–947 the composition is skewed to pro residues; sequence IPPPPTTSPPEPPYSTPPAP. Arg-958 is subject to Omega-N-methylarginine. Positions 964-980 are enriched in low complexity; sequence PSSGGPLPASSPSSFDG. Residues 1004 to 1028 show a composition bias toward basic residues; sequence AHHHPPHHHHHHAPPPQPHHHHAHP. Arg-1059 bears the Omega-N-methylarginine mark. The span at 1064 to 1085 shows a compositional bias: low complexity; sequence SPTSGAPSPSHHSSSGGSSGPT. Omega-N-methylarginine is present on residues Arg-1098 and Arg-1109. Composition is skewed to low complexity over residues 1132 to 1146 and 1171 to 1184; these read SIPS…ALPR and STSS…GSST. Pro residues predominate over residues 1203–1224; that stretch reads SPAPATSPVPPSPSPVPTPASP. The segment covering 1245 to 1256 has biased composition (basic and acidic residues); it reads RREGGWQNEARR. Residue Arg-1257 is modified to Asymmetric dimethylarginine. Phosphoserine is present on Ser-1291. Residues 1363-1372 show a composition bias toward basic and acidic residues; sequence ARERALKESS. Pro residues predominate over residues 1378 to 1395; sequence PQPPPRPPSPRYDAPPPT. The span at 1396–1408 shows a compositional bias: basic residues; sequence LHHHSPHSPHSPH. Position 1429 is an omega-N-methylarginine (Arg-1429). Ser-1442 bears the Phosphoserine mark. Low complexity-rich tracts occupy residues 1459–1469 and 1530–1541; these read PGVGPLLLQLG and RRVLPTSPTSPR. The span at 1589-1615 shows a compositional bias: pro residues; sequence PLTPGPPHPLPDPPSPATPLPAAPPPA. The segment covering 1624–1641 has biased composition (polar residues); that stretch reads DSTASSLTSYDSEVATLT. The span at 1648–1676 shows a compositional bias: pro residues; the sequence is PGDPPAPGPPAPAAPAPPAPQPGPDPPPG. The segment covering 1684 to 1694 has biased composition (basic and acidic residues); it reads VDSRSSSDHPL. Residues 1695-1708 show a composition bias toward low complexity; that stretch reads ETISSASTLSSLSA. Residues 1709–1724 show a composition bias toward gly residues; that stretch reads EGGGNTGGVAGGGAGV. A compositionally biased stretch (pro residues) spans 1850–1861; the sequence is PGPPPPPLPGPL. An Omega-N-methylarginine modification is found at Arg-1901. 3 stretches are compositionally biased toward low complexity: residues 1934-1945, 1960-1985, and 2002-2012; these read SQTSLLSKPSSS, TGSG…ASAS, and RRAPSPSLLPA. Omega-N-methylarginine occurs at positions 2022, 2042, and 2080. One can recognise an SAM domain in the interval 2104 to 2167; it reads WTKFDVADWL…DRALKFFLER (64 aa).

Belongs to the SHANK family. As to quaternary structure, may homomultimerize via its SAM domain. Interacts with the C-terminus of SSTR2 via the PDZ domain. Interacts with SHARPIN, SPTAN1 and DLGAP1/GKAP. Part of a complex with DLG4/PSD-95 and DLGAP1/GKAP. Interacts with BAIAP2. Interacts with IGSF9. Interacts with HOMER1 and HOMER3. Expressed only in brain (neuropil of cortex, CA1 region hippocampus and molecular layer of cerebellum).

It is found in the cytoplasm. Its subcellular location is the synapse. The protein localises to the postsynaptic density. Functionally, seems to be an adapter protein in the postsynaptic density (PSD) of excitatory synapses that interconnects receptors of the postsynaptic membrane including NMDA-type and metabotropic glutamate receptors, and the actin-based cytoskeleton. Plays a role in the structural and functional organization of the dendritic spine and synaptic junction. Overexpression promotes maturation of dendritic spines and the enlargement of spine heads via its ability to recruit Homer to postsynaptic sites, and enhances presynaptic function. This Rattus norvegicus (Rat) protein is SH3 and multiple ankyrin repeat domains protein 1 (Shank1).